Consider the following 624-residue polypeptide: tRNA uridine 5-carboxymethylaminomethyl modification enzyme MnmG (624 aa).

FAD-binding positions include 13-18, valine 125, and serine 180; that span reads GGGHAG. 273 to 287 is an NAD(+) binding site; sequence GPRYCPSIEDKIVRF. Glutamine 370 lines the FAD pocket.

It belongs to the MnmG family. Homodimer. Heterotetramer of two MnmE and two MnmG subunits. Requires FAD as cofactor.

The protein resides in the cytoplasm. NAD-binding protein involved in the addition of a carboxymethylaminomethyl (cmnm) group at the wobble position (U34) of certain tRNAs, forming tRNA-cmnm(5)s(2)U34. This Legionella pneumophila (strain Corby) protein is tRNA uridine 5-carboxymethylaminomethyl modification enzyme MnmG.